The following is a 179-amino-acid chain: Endoribonuclease YbeY (179 aa).

H148, H152, and H158 together coordinate Zn(2+).

The protein belongs to the endoribonuclease YbeY family. Zn(2+) serves as cofactor.

It localises to the cytoplasm. Its function is as follows. Single strand-specific metallo-endoribonuclease involved in late-stage 70S ribosome quality control and in maturation of the 3' terminus of the 16S rRNA. The protein is Endoribonuclease YbeY of Prochlorococcus marinus (strain MIT 9215).